A 343-amino-acid polypeptide reads, in one-letter code: Cyclin-Y-like protein 1 (343 aa).

The interval 1–48 (MGNTVTCCVSPDASPKAGRDRAVTERGEPYQAQVELQETDPGPHLQHI) is disordered. Residues 17-28 (AGRDRAVTERGE) show a composition bias toward basic and acidic residues. In terms of domain architecture, Cyclin N-terminal spans 145 to 267 (EIFDEKLHPL…FLELLQFNIN (123 aa)).

The protein belongs to the cyclin family. Cyclin Y subfamily.

It is found in the cell membrane. Its function is as follows. Key regulator of Wnt signaling implicated in various biological processes, such as embryonic neurogenesis. This is Cyclin-Y-like protein 1 (ccnyl1) from Xenopus tropicalis (Western clawed frog).